A 101-amino-acid polypeptide reads, in one-letter code: Large ribosomal subunit protein uL23 (101 aa).

The protein belongs to the universal ribosomal protein uL23 family. Part of the 50S ribosomal subunit. Contacts protein L29, and trigger factor when it is bound to the ribosome.

Functionally, one of the early assembly proteins it binds 23S rRNA. One of the proteins that surrounds the polypeptide exit tunnel on the outside of the ribosome. Forms the main docking site for trigger factor binding to the ribosome. The protein is Large ribosomal subunit protein uL23 of Rhodococcus jostii (strain RHA1).